The primary structure comprises 193 residues: Protein CURVATURE THYLAKOID 1D, chloroplastic (193 aa).

Residues Met-1–Arg-51 constitute a chloroplast transit peptide. Over Cys-52–Thr-117 the chain is Stromal. The chain crosses the membrane as a helical span at residues Tyr-118 to Val-138. Over Ser-139–Glu-142 the chain is Lumenal. The chain crosses the membrane as a helical span at residues Ala-143–Thr-163. Residues Thr-164–Glu-193 lie on the Stromal side of the membrane.

This sequence belongs to the CURT family. As to quaternary structure, homo- and heterodimers and trimers.

It is found in the plastid. Its subcellular location is the chloroplast thylakoid membrane. In terms of biological role, determines thylakoid architecture by inducing membrane curvature. The sequence is that of Protein CURVATURE THYLAKOID 1D, chloroplastic (CURT1D) from Arabidopsis thaliana (Mouse-ear cress).